We begin with the raw amino-acid sequence, 342 residues long: S-adenosylmethionine:tRNA ribosyltransferase-isomerase (342 aa).

It belongs to the QueA family. As to quaternary structure, monomer.

Its subcellular location is the cytoplasm. The enzyme catalyses 7-aminomethyl-7-carbaguanosine(34) in tRNA + S-adenosyl-L-methionine = epoxyqueuosine(34) in tRNA + adenine + L-methionine + 2 H(+). It functions in the pathway tRNA modification; tRNA-queuosine biosynthesis. Its function is as follows. Transfers and isomerizes the ribose moiety from AdoMet to the 7-aminomethyl group of 7-deazaguanine (preQ1-tRNA) to give epoxyqueuosine (oQ-tRNA). This chain is S-adenosylmethionine:tRNA ribosyltransferase-isomerase, found in Streptococcus pneumoniae serotype 19F (strain G54).